We begin with the raw amino-acid sequence, 132 residues long: MRHYVLSISFAVALFLECYTPSTAISIGKMDDVALEQDTLDSLLSVEVSENSPDSVRGRSSKIVLLADSGLWMNLNRGLPFYKLRAAAAGPDRALTLDRREAGQDLSPSISIVRRDTMRCMVGRVYRPCWEV.

Residues 1–24 (MRHYVLSISFAVALFLECYTPSTA) form the signal peptide. Cysteine 120 and cysteine 129 form a disulfide bridge.

Belongs to the melanin-concentrating hormone family. Pituitary gland. Produced in neurons of lateral basal hypothalamus which project both to the brain and to the neural lobe of the pituitary gland from where MCH is released.

Plays a role in skin pigmentation by antagonizing the action of melanotropin alpha. Induces melanin concentration within the melanophores. May participate in the control of the hypothalamo-pituitary adrenal gland axis by inhibiting the release of ACTH. This chain is Pro-MCH 1 (mch1), found in Oncorhynchus keta (Chum salmon).